The sequence spans 487 residues: 2-aminomuconic semialdehyde dehydrogenase (487 aa).

209-215 (GTGPRVG) is a binding site for NAD(+). Glu-253 (proton acceptor) is an active-site residue. Cys-287 serves as the catalytic Nucleophile. Ser-362 carries the phosphoserine modification.

It belongs to the aldehyde dehydrogenase family. As to expression, highly expressed in adult kidney and liver. Detected at lower levels in fetal liver and kidney.

The protein resides in the cytoplasm. It carries out the reaction 2-aminomuconate 6-semialdehyde + NAD(+) + H2O = (2Z,4E)-2-aminomuconate + NADH + 2 H(+). The protein operates within amino-acid degradation; L-kynurenine degradation. In terms of biological role, catalyzes the NAD-dependent oxidation of 2-aminomuconic semialdehyde of the kynurenine metabolic pathway in L-tryptophan degradation. This chain is 2-aminomuconic semialdehyde dehydrogenase, found in Homo sapiens (Human).